Consider the following 204-residue polypeptide: Golgi to ER traffic protein 1 (204 aa).

The Lumenal portion of the chain corresponds to M1–I11. Residues L12 to Q31 traverse the membrane as a helical segment. Over K32–I116 the chain is Cytoplasmic. The stretch at A78 to K113 forms a coiled coil. Residues T117–L137 traverse the membrane as a helical segment. The Lumenal portion of the chain corresponds to Y138–T161. A helical membrane pass occupies residues I162–L178. Over I179 to S204 the chain is Cytoplasmic.

Belongs to the WRB/GET1 family. Component of the Golgi to ER traffic (GET) complex, which is composed of GET1, GET2 and GET3. Within the complex, GET1 and GET2 form a heterotetramer which is stabilized by phosphatidylinositol binding and which binds to the GET3 homodimer.

The protein resides in the endoplasmic reticulum membrane. It is found in the golgi apparatus membrane. In terms of biological role, required for the post-translational delivery of tail-anchored (TA) proteins to the endoplasmic reticulum. Together with GET2, acts as a membrane receptor for soluble GET3, which recognizes and selectively binds the transmembrane domain of TA proteins in the cytosol. The GET complex cooperates with the HDEL receptor ERD2 to mediate the ATP-dependent retrieval of resident ER proteins that contain a C-terminal H-D-E-L retention signal from the Golgi to the ER. In Lodderomyces elongisporus (strain ATCC 11503 / CBS 2605 / JCM 1781 / NBRC 1676 / NRRL YB-4239) (Yeast), this protein is Golgi to ER traffic protein 1.